The sequence spans 468 residues: ATP synthase subunit beta (468 aa).

155–162 (GGAGVGKT) lines the ATP pocket.

The protein belongs to the ATPase alpha/beta chains family. As to quaternary structure, F-type ATPases have 2 components, CF(1) - the catalytic core - and CF(0) - the membrane proton channel. CF(1) has five subunits: alpha(3), beta(3), gamma(1), delta(1), epsilon(1). CF(0) has three main subunits: a(1), b(2) and c(9-12). The alpha and beta chains form an alternating ring which encloses part of the gamma chain. CF(1) is attached to CF(0) by a central stalk formed by the gamma and epsilon chains, while a peripheral stalk is formed by the delta and b chains.

It is found in the cell membrane. It carries out the reaction ATP + H2O + 4 H(+)(in) = ADP + phosphate + 5 H(+)(out). Functionally, produces ATP from ADP in the presence of a proton gradient across the membrane. The catalytic sites are hosted primarily by the beta subunits. The protein is ATP synthase subunit beta of Streptococcus pyogenes serotype M1.